We begin with the raw amino-acid sequence, 180 residues long: Adenine phosphoribosyltransferase (180 aa).

At Ser2 the chain carries N-acetylserine. A phosphoserine mark is found at Ser15 and Ser30. Tyr60 is subject to Phosphotyrosine. A Phosphoserine modification is found at Ser66. Lys114 is subject to N6-acetyllysine. Phosphothreonine is present on Thr135.

This sequence belongs to the purine/pyrimidine phosphoribosyltransferase family. Homodimer.

The protein resides in the cytoplasm. It catalyses the reaction AMP + diphosphate = 5-phospho-alpha-D-ribose 1-diphosphate + adenine. It functions in the pathway purine metabolism; AMP biosynthesis via salvage pathway; AMP from adenine: step 1/1. Catalyzes a salvage reaction resulting in the formation of AMP, that is energically less costly than de novo synthesis. The protein is Adenine phosphoribosyltransferase of Stochomys longicaudatus (Target rat).